A 555-amino-acid polypeptide reads, in one-letter code: Hydroxylamine reductase (555 aa).

The [4Fe-4S] cluster site is built by Cys-3, Cys-6, Cys-18, and Cys-25. Positions 252, 276, 320, 407, 435, 460, 494, and 496 each coordinate hybrid [4Fe-2O-2S] cluster. The residue at position 407 (Cys-407) is a Cysteine persulfide.

The protein belongs to the HCP family. Requires [4Fe-4S] cluster as cofactor. Hybrid [4Fe-2O-2S] cluster is required as a cofactor.

It is found in the cytoplasm. The enzyme catalyses A + NH4(+) + H2O = hydroxylamine + AH2 + H(+). In terms of biological role, catalyzes the reduction of hydroxylamine to form NH(3) and H(2)O. The sequence is that of Hydroxylamine reductase from Burkholderia ambifaria (strain MC40-6).